We begin with the raw amino-acid sequence, 658 residues long: tRNA uridine 5-carboxymethylaminomethyl modification enzyme MnmG (658 aa).

Gly-13–Gly-18 is a binding site for FAD. An NAD(+)-binding site is contributed by Gly-285–Phe-299.

This sequence belongs to the MnmG family. As to quaternary structure, homodimer. Heterotetramer of two MnmE and two MnmG subunits. The cofactor is FAD.

Its subcellular location is the cytoplasm. Its function is as follows. NAD-binding protein involved in the addition of a carboxymethylaminomethyl (cmnm) group at the wobble position (U34) of certain tRNAs, forming tRNA-cmnm(5)s(2)U34. The sequence is that of tRNA uridine 5-carboxymethylaminomethyl modification enzyme MnmG from Verminephrobacter eiseniae (strain EF01-2).